A 156-amino-acid chain; its full sequence is MGKKVVDITAELVKPILEQLDLELYDVEFKKEGKDWFLRVFIDSETGVDLEDCGKVSERLSEKLDETDPIEQAYFLEVSSPGAERPLKREKDLLRSIGKNVHVTLYEPIDGEKALEGELTEFDGETLTIEIKIKTRKKTVTIPYAKVASARLAVVF.

This sequence belongs to the RimP family.

It localises to the cytoplasm. Its function is as follows. Required for maturation of 30S ribosomal subunits. This chain is Ribosome maturation factor RimP, found in Halalkalibacterium halodurans (strain ATCC BAA-125 / DSM 18197 / FERM 7344 / JCM 9153 / C-125) (Bacillus halodurans).